The sequence spans 72 residues: SRY-related protein AES4 (72 aa).

Residues 1 to 69 constitute a DNA-binding region (HMG box); sequence VKRPMNAFMV…KHMADYPDYK (69 aa).

It is found in the nucleus. This Alligator mississippiensis (American alligator) protein is SRY-related protein AES4.